Reading from the N-terminus, the 694-residue chain is Polyribonucleotide nucleotidyltransferase (694 aa).

Mg(2+) contacts are provided by D485 and D491. The region spanning 552–611 is the KH domain; it reads PRIETMQIKPNKIATVIGPGGKQIRQIIEEAGVQIDINDSGLVSISASSPQAIEKAKSII. The S1 motif domain occupies 621 to 689; it reads GKIYEGRVTS…EKGQYKLSHK (69 aa).

Belongs to the polyribonucleotide nucleotidyltransferase family. Requires Mg(2+) as cofactor.

The protein localises to the cytoplasm. The catalysed reaction is RNA(n+1) + phosphate = RNA(n) + a ribonucleoside 5'-diphosphate. Involved in mRNA degradation. Catalyzes the phosphorolysis of single-stranded polyribonucleotides processively in the 3'- to 5'-direction. The polypeptide is Polyribonucleotide nucleotidyltransferase (Chlamydia felis (strain Fe/C-56) (Chlamydophila felis)).